The primary structure comprises 193 residues: Acyl carrier protein phosphodiesterase (193 aa).

Belongs to the AcpH family.

The enzyme catalyses holo-[ACP] + H2O = apo-[ACP] + (R)-4'-phosphopantetheine + H(+). Functionally, converts holo-ACP to apo-ACP by hydrolytic cleavage of the phosphopantetheine prosthetic group from ACP. The sequence is that of Acyl carrier protein phosphodiesterase from Shigella boydii serotype 4 (strain Sb227).